Reading from the N-terminus, the 117-residue chain is Large ribosomal subunit protein bL19 (117 aa).

The protein belongs to the bacterial ribosomal protein bL19 family.

Its function is as follows. This protein is located at the 30S-50S ribosomal subunit interface and may play a role in the structure and function of the aminoacyl-tRNA binding site. In Aliivibrio salmonicida (strain LFI1238) (Vibrio salmonicida (strain LFI1238)), this protein is Large ribosomal subunit protein bL19.